The primary structure comprises 236 residues: Glycoprotein U23 (236 aa).

An N-terminal signal peptide occupies residues methionine 1 to methionine 17. Asparagine 67, asparagine 80, and asparagine 103 each carry an N-linked (GlcNAc...) asparagine; by host glycan. The chain crosses the membrane as a helical span at residues leucine 184–leucine 204.

The protein localises to the membrane. The polypeptide is Glycoprotein U23 (U23) (Human herpesvirus 6A (strain Uganda-1102) (HHV-6 variant A)).